Consider the following 174-residue polypeptide: MAPAVMASSATTVAPFQGLKSTAGLPVSRRSRGSLGSVSNGGRIRCMQVWPIEGIKKFETLSYLPPLSTEALSKQVDYLIRSKWVPCLEFSKVGFVFREHNSSPGYYDGRYWTMWKLPMFGCTDATQVLNEVEEVKKEYPDAYVRVIGFDNLRQVQCVSFIAFRPPGCEESGKA.

Residues 1–45 (MAPAVMASSATTVAPFQGLKSTAGLPVSRRSRGSLGSVSNGGRIR) constitute a chloroplast transit peptide.

This sequence belongs to the RuBisCO small chain family. In terms of assembly, heterohexadecamer of 8 large and 8 small subunits.

Its subcellular location is the plastid. It localises to the chloroplast. RuBisCO catalyzes two reactions: the carboxylation of D-ribulose 1,5-bisphosphate, the primary event in carbon dioxide fixation, as well as the oxidative fragmentation of the pentose substrate. Both reactions occur simultaneously and in competition at the same active site. Although the small subunit is not catalytic it is essential for maximal activity. The sequence is that of Ribulose bisphosphate carboxylase small subunit, chloroplastic 1 from Triticum aestivum (Wheat).